A 425-amino-acid polypeptide reads, in one-letter code: Serine--tRNA ligase (425 aa).

Position 230–232 (230–232 (TAE)) interacts with L-serine. 261–263 (RSE) contacts ATP. Glutamate 284 contributes to the L-serine binding site. ATP is bound at residue 348 to 351 (EISS). Serine 383 is a binding site for L-serine.

Belongs to the class-II aminoacyl-tRNA synthetase family. Type-1 seryl-tRNA synthetase subfamily. In terms of assembly, homodimer. The tRNA molecule binds across the dimer.

It localises to the cytoplasm. The catalysed reaction is tRNA(Ser) + L-serine + ATP = L-seryl-tRNA(Ser) + AMP + diphosphate + H(+). It carries out the reaction tRNA(Sec) + L-serine + ATP = L-seryl-tRNA(Sec) + AMP + diphosphate + H(+). It functions in the pathway aminoacyl-tRNA biosynthesis; selenocysteinyl-tRNA(Sec) biosynthesis; L-seryl-tRNA(Sec) from L-serine and tRNA(Sec): step 1/1. In terms of biological role, catalyzes the attachment of serine to tRNA(Ser). Is also able to aminoacylate tRNA(Sec) with serine, to form the misacylated tRNA L-seryl-tRNA(Sec), which will be further converted into selenocysteinyl-tRNA(Sec). This is Serine--tRNA ligase from Ligilactobacillus salivarius (strain UCC118) (Lactobacillus salivarius).